The sequence spans 463 residues: RuvB-like helicase 2 (463 aa).

76 to 83 (GPPSTGKT) serves as a coordination point for ATP.

It belongs to the RuvB family. May form heterododecamers with RVB1. Component of the SWR1 chromatin remodeling complex, the INO80 chromatin remodeling complex, and of the R2TP complex.

It localises to the nucleus. The enzyme catalyses ATP + H2O = ADP + phosphate + H(+). Its function is as follows. DNA helicase which participates in several chromatin remodeling complexes, including the SWR1 and the INO80 complexes. The SWR1 complex mediates the ATP-dependent exchange of histone H2A for the H2A variant HZT1 leading to transcriptional regulation of selected genes by chromatin remodeling. The INO80 complex remodels chromatin by shifting nucleosomes and is involved in DNA repair. Also involved in pre-rRNA processing. The polypeptide is RuvB-like helicase 2 (RVB2) (Cryptococcus neoformans var. neoformans serotype D (strain JEC21 / ATCC MYA-565) (Filobasidiella neoformans)).